The primary structure comprises 529 residues: ATP synthase F(1) complex catalytic subunit beta, mitochondrial (529 aa).

A mitochondrion-targeting transit peptide spans 1–46 (MLSLVGRVASASASGALRGLSPSAALPQAQLLLRAAPAGVHPARDY). Ser-106 is a glycosylation site (O-linked (GlcNAc) serine). An N6-acetyllysine; alternate mark is found at Lys-124, Lys-133, and Lys-161. An N6-succinyllysine; alternate mark is found at Lys-124, Lys-133, and Lys-161. Lys-198 is modified (N6-acetyllysine). ADP contacts are provided by Gly-209, Val-210, Gly-211, Lys-212, Thr-213, and Val-214. ATP is bound at residue Gly-209. Phosphate contacts are provided by Gly-209, Val-210, Gly-211, Lys-212, and Thr-213. ATP is bound by residues Gly-211, Lys-212, Thr-213, and Val-214. Thr-213 contributes to the Mg(2+) binding site. A Mg(2+)-binding site is contributed by Glu-238. Arg-239 serves as a coordination point for ATP. 2 positions are modified to N6-acetyllysine; alternate: Lys-259 and Lys-264. Lys-259 and Lys-264 each carry N6-succinyllysine; alternate. Thr-312 bears the Phosphothreonine mark. Lys-426 carries the N6-acetyllysine modification. Ser-433 carries the post-translational modification Phosphoserine. Lys-480 and Lys-485 each carry N6-acetyllysine. At Lys-522 the chain carries N6-acetyllysine; alternate. N6-succinyllysine; alternate is present on Lys-522. Position 529 is a phosphoserine (Ser-529).

Belongs to the ATPase alpha/beta chains family. Homotrimer. Component of the ATP synthase complex composed at least of ATP5F1A/subunit alpha, ATP5F1B/subunit beta, ATP5MC1/subunit c (homooctomer), MT-ATP6/subunit a, MT-ATP8/subunit 8, ATP5ME/subunit e, ATP5MF/subunit f, ATP5MG/subunit g, ATP5MK/subunit k, ATP5MJ/subunit j, ATP5F1C/subunit gamma, ATP5F1D/subunit delta, ATP5F1E/subunit epsilon, ATP5PF/subunit F6, ATP5PB/subunit b, ATP5PD/subunit d, ATP5PO/subunit OSCP. ATP synthase complex consists of a soluble F(1) head domain (subunits alpha(3) and beta(3)) - the catalytic core - and a membrane F(0) domain - the membrane proton channel (subunits c, a, 8, e, f, g, k and j). These two domains are linked by a central stalk (subunits gamma, delta, and epsilon) rotating inside the F1 region and a stationary peripheral stalk (subunits F6, b, d, and OSCP). Interacts with PPIF. Interacts with BCL2L1 isoform BCL-X(L); the interaction mediates the association of BCL2L1 isoform BCL-X(L) with the mitochondrial membrane F(1)F(0) ATP synthase and enhances neurons metabolic efficiency. Interacts with CLN5 and PPT1. Interacts with S100A1; this interaction increases F1-ATPase activity. Interacts with MTLN. Interacts with TTC5/STRAP; the interaction results in decreased mitochondrial ATP production. Acetylation of Lys-133 is observed in liver mitochondria from fasted mice but not from fed mice.

It is found in the mitochondrion inner membrane. It carries out the reaction ATP + H2O + 4 H(+)(in) = ADP + phosphate + 5 H(+)(out). Its function is as follows. Catalytic subunit beta, of the mitochondrial membrane ATP synthase complex (F(1)F(0) ATP synthase or Complex V) that produces ATP from ADP in the presence of a proton gradient across the membrane which is generated by electron transport complexes of the respiratory chain. ATP synthase complex consist of a soluble F(1) head domain - the catalytic core - and a membrane F(1) domain - the membrane proton channel. These two domains are linked by a central stalk rotating inside the F(1) region and a stationary peripheral stalk. During catalysis, ATP synthesis in the catalytic domain of F(1) is coupled via a rotary mechanism of the central stalk subunits to proton translocation. In vivo, can only synthesize ATP although its ATP hydrolase activity can be activated artificially in vitro. With the subunit alpha (ATP5F1A), forms the catalytic core in the F(1) domain. The polypeptide is ATP synthase F(1) complex catalytic subunit beta, mitochondrial (Mus musculus (Mouse)).